The following is a 440-amino-acid chain: Transposon Ty1-ER2 Gag polyprotein (440 aa).

Composition is skewed to polar residues over residues M1–P10, T48–S60, and Q127–F152. Disordered regions lie at residues M1–Q93, P126–P173, and G352–Y440. Residues T153–T165 are compositionally biased toward low complexity. Positions N299–H401 are RNA-binding. Residues N402–S418 show a composition bias toward low complexity. A Phosphoserine modification is found at S416. Positions K419–N428 are enriched in polar residues. Positions N429–Y440 are enriched in basic and acidic residues.

In terms of assembly, homotrimer.

The protein resides in the cytoplasm. In terms of biological role, capsid protein (CA) is the structural component of the virus-like particle (VLP), forming the shell that encapsulates the retrotransposons dimeric RNA genome. The particles are assembled from trimer-clustered units and there are holes in the capsid shells that allow for the diffusion of macromolecules. CA also has nucleocapsid-like chaperone activity, promoting primer tRNA(i)-Met annealing to the multipartite primer-binding site (PBS), dimerization of Ty1 RNA and initiation of reverse transcription. This chain is Transposon Ty1-ER2 Gag polyprotein (TY1A-ER2), found in Saccharomyces cerevisiae (strain ATCC 204508 / S288c) (Baker's yeast).